A 132-amino-acid chain; its full sequence is MFLTDPISDLIVRIKNANQRKHKTVEIPHSNKKEAIVKLIKEEGYISSYSVEGSKKTDKRLLVTLKYKGKQSAIVGIKRVSKPGLRVYVKSEEIPKVLSGYGTCIMSTSKGLMTDKEARKANVGGEIIAFIW.

This sequence belongs to the universal ribosomal protein uS8 family. In terms of assembly, part of the 30S ribosomal subunit. Contacts proteins S5 and S12.

One of the primary rRNA binding proteins, it binds directly to 16S rRNA central domain where it helps coordinate assembly of the platform of the 30S subunit. The polypeptide is Small ribosomal subunit protein uS8 (Mycoplasmopsis synoviae (strain 53) (Mycoplasma synoviae)).